The following is a 391-amino-acid chain: Lysophosphatidylinositol acyltransferase 10 (391 aa).

5 helical membrane passes run 10–30, 52–72, 97–119, 323–343, and 347–367; these read LLGWFFGLCILFSALFGNYII, AISYWMTIPMGLLEFLMGVRI, WMYMWCALYQINPWLITSNKISL, LTSLMFWTLVISFCSYHIFFV, and QLGFLYFFVISFYLSWRYGGI.

This sequence belongs to the 1-acyl-sn-glycerol-3-phosphate acyltransferase family. As to expression, expressed in seam cells, vulval epithelial cells and the major epithelial syncytium hyp7, and in several head neurons including AIY interneurons.

Its subcellular location is the endoplasmic reticulum membrane. The catalysed reaction is a 2-acyl-sn-glycero-3-phospho-D-myo-inositol + an acyl-CoA = a 1,2-diacyl-sn-glycero-3-phospho-(1D-myo-inositol) + CoA. The enzyme catalyses a 2-acyl-sn-glycero-3-phospho-D-myo-inositol + octadecanoyl-CoA = 1-octadecanoyl-2-acyl-sn-glycero-3-phospho-1D-myo-inositol + CoA. Its pathway is phospholipid metabolism; phosphatidylinositol metabolism. Its function is as follows. Acyltransferase required for the fatty acid remodeling of phosphatidylinositol (1,2-diacyl-sn-glycero-3-phosphoinositol or PI). Mediates the conversion of lysophosphatidylinositol (2-acylglycerophosphatidylinositol or LPI) into PI (LPIAT activity). Has preference for saturated and mono-unsaturated fatty acids as acyl donors and sn-2-acyl lysoPI (2-acyl-sn-glycero-3-phospho-D-myo-inositol) as acyl acceptor. Contributes to the asymmetric cell division of epithelial cells. Asymmetric cell division is the fundamental mechanism by which multicellular organisms generate cell diversity. The polypeptide is Lysophosphatidylinositol acyltransferase 10 (Caenorhabditis elegans).